A 418-amino-acid chain; its full sequence is Gamma-glutamyl phosphate reductase (418 aa).

It belongs to the gamma-glutamyl phosphate reductase family.

The protein resides in the cytoplasm. The enzyme catalyses L-glutamate 5-semialdehyde + phosphate + NADP(+) = L-glutamyl 5-phosphate + NADPH + H(+). It functions in the pathway amino-acid biosynthesis; L-proline biosynthesis; L-glutamate 5-semialdehyde from L-glutamate: step 2/2. Its function is as follows. Catalyzes the NADPH-dependent reduction of L-glutamate 5-phosphate into L-glutamate 5-semialdehyde and phosphate. The product spontaneously undergoes cyclization to form 1-pyrroline-5-carboxylate. The polypeptide is Gamma-glutamyl phosphate reductase (Thermodesulfovibrio yellowstonii (strain ATCC 51303 / DSM 11347 / YP87)).